We begin with the raw amino-acid sequence, 202 residues long: Alpha-S1-casein (202 aa).

Disordered stretches follow at residues R1–E25 and L51–I84. Basic and acidic residues-rich tracts occupy residues Q16–E25 and L51–L63. S18 carries the phosphoserine modification. Over residues Q70 to E80 the composition is skewed to low complexity. 6 positions are modified to phosphoserine: S72, S73, S74, S76, S77, and S78.

This sequence belongs to the alpha-casein family. Mammary gland specific. Secreted in milk.

The protein resides in the secreted. Functionally, important role in the capacity of milk to transport calcium phosphate. The polypeptide is Alpha-S1-casein (Equus asinus (Donkey)).